A 239-amino-acid polypeptide reads, in one-letter code: Protein LIFEGUARD 2 (239 aa).

The next 7 membrane-spanning stretches (helical) occupy residues 41 to 61 (LLVT…SVFF), 66 to 86 (AGFA…CPLY), 96 to 116 (YLLL…TCAF), 121 to 141 (VILE…LYTF), 156 to 176 (FLFG…LFPL), 179 to 199 (ISVM…IVYD), and 213 to 233 (IWAA…LLTL).

This sequence belongs to the BI1 family. Expressed in seedlings, roots, leaves, inflorescences and flowers.

It is found in the membrane. In terms of biological role, regulates the brassinosteroid (BR) signaling pathway that mediates cell elongation and organ morphogenesis. Its function is as follows. (Microbial infection) Facilitates the development of the powdery mildew fungus E.cruciferarum. (Microbial infection) May prevent cell death upon A.alternata f.sp. lycopersici (AAL) toxin treatment. This is Protein LIFEGUARD 2 from Arabidopsis thaliana (Mouse-ear cress).